The following is a 115-amino-acid chain: Regulator of ribonuclease activity B (115 aa).

The protein belongs to the RraB family. In terms of assembly, interacts with the C-terminal region of Rne.

It is found in the cytoplasm. In terms of biological role, globally modulates RNA abundance by binding to RNase E (Rne) and regulating its endonucleolytic activity. Can modulate Rne action in a substrate-dependent manner by altering the composition of the degradosome. This Aeromonas salmonicida (strain A449) protein is Regulator of ribonuclease activity B.